The chain runs to 304 residues: Glycine--tRNA ligase alpha subunit (304 aa).

It belongs to the class-II aminoacyl-tRNA synthetase family. As to quaternary structure, tetramer of two alpha and two beta subunits.

The protein localises to the cytoplasm. The catalysed reaction is tRNA(Gly) + glycine + ATP = glycyl-tRNA(Gly) + AMP + diphosphate. This chain is Glycine--tRNA ligase alpha subunit, found in Streptococcus agalactiae serotype Ia (strain ATCC 27591 / A909 / CDC SS700).